Here is a 567-residue protein sequence, read N- to C-terminus: DNA ligase (567 aa).

E246 is a binding site for ATP. K248 functions as the N6-AMP-lysine intermediate in the catalytic mechanism. The ATP site is built by R253, R268, E298, F339, R415, and K421.

This sequence belongs to the ATP-dependent DNA ligase family. Mg(2+) serves as cofactor.

It carries out the reaction ATP + (deoxyribonucleotide)n-3'-hydroxyl + 5'-phospho-(deoxyribonucleotide)m = (deoxyribonucleotide)n+m + AMP + diphosphate.. Functionally, DNA ligase that seals nicks in double-stranded DNA during DNA replication, DNA recombination and DNA repair. The polypeptide is DNA ligase (Nanoarchaeum equitans (strain Kin4-M)).